The chain runs to 185 residues: UPF0149 protein XF_2010 (185 aa).

It belongs to the UPF0149 family.

This chain is UPF0149 protein XF_2010, found in Xylella fastidiosa (strain 9a5c).